The primary structure comprises 260 residues: LOB domain-containing protein 6 (260 aa).

In terms of domain architecture, LOB spans 32-133 (SPCAACKFLR…QDLARAKYEL (102 aa)).

The protein belongs to the LOB domain-containing protein family. As to quaternary structure, interacts with RS2. As to expression, expressed in leaves, leaf primordia, immature ears, immature tassels, whole ovules, silk and husk leaves. Found on the adaxial side of organs.

Its subcellular location is the nucleus. In terms of biological role, promotes the switch from proliferation to differentiation in the embryo sac. Negative regulator of cell proliferation in the adaxial side of leaves. Regulates the formation of a symmetric lamina and the establishment of venation. Interacts directly with RS2 (rough sheath 2) to repress some knox homeobox genes. The chain is LOB domain-containing protein 6 (LBD6) from Zea mays (Maize).